The primary structure comprises 414 residues: Probable 26S proteasome regulatory subunit 6B (414 aa).

Residue 202–209 participates in ATP binding; the sequence is GPPGCGKT.

The protein belongs to the AAA ATPase family.

It localises to the cytoplasm. The protein localises to the nucleus. Its function is as follows. The 26S proteasome is involved in the ATP-dependent degradation of ubiquitinated proteins. The regulatory (or ATPase) complex confers ATP dependency and substrate specificity to the 26S complex. The chain is Probable 26S proteasome regulatory subunit 6B (rpt-3) from Caenorhabditis elegans.